We begin with the raw amino-acid sequence, 324 residues long: tRNA U34 carboxymethyltransferase (324 aa).

Carboxy-S-adenosyl-L-methionine is bound by residues Lys-92, Trp-106, Lys-111, Gly-131, 153-155 (DPS), Met-197, Tyr-201, and Arg-316.

It belongs to the class I-like SAM-binding methyltransferase superfamily. CmoB family. In terms of assembly, homotetramer.

The enzyme catalyses carboxy-S-adenosyl-L-methionine + 5-hydroxyuridine(34) in tRNA = 5-carboxymethoxyuridine(34) in tRNA + S-adenosyl-L-homocysteine + H(+). Functionally, catalyzes carboxymethyl transfer from carboxy-S-adenosyl-L-methionine (Cx-SAM) to 5-hydroxyuridine (ho5U) to form 5-carboxymethoxyuridine (cmo5U) at position 34 in tRNAs. The sequence is that of tRNA U34 carboxymethyltransferase from Hahella chejuensis (strain KCTC 2396).